The following is a 386-amino-acid chain: GTPase Obg (386 aa).

In terms of domain architecture, Obg spans 4–162; the sequence is SNFVDYVKIY…RTVILQLKLL (159 aa). The disordered stretch occupies residues 18 to 44; sequence KGGRGSSHFRREKYIPKGGPDGGDGGR. One can recognise an OBG-type G domain in the interval 163-329; sequence ADVGLVGFPN…LKDLLWKELN (167 aa). Residues 169-176, 194-198, 216-219, 283-286, and 310-312 each bind GTP; these read GFPNAGKS, FTTLE, DIPG, TKSD, and SSI. Residues serine 176 and threonine 196 each coordinate Mg(2+). Residues 357–386 form a disordered region; it reads YIFPVDEDEDDPDEEYEEYWDDDEDEDTRK.

The protein belongs to the TRAFAC class OBG-HflX-like GTPase superfamily. OBG GTPase family. Monomer. Mg(2+) serves as cofactor.

It is found in the cytoplasm. An essential GTPase which binds GTP, GDP and possibly (p)ppGpp with moderate affinity, with high nucleotide exchange rates and a fairly low GTP hydrolysis rate. Plays a role in control of the cell cycle, stress response, ribosome biogenesis and in those bacteria that undergo differentiation, in morphogenesis control. This Parabacteroides distasonis (strain ATCC 8503 / DSM 20701 / CIP 104284 / JCM 5825 / NCTC 11152) protein is GTPase Obg.